A 147-amino-acid chain; its full sequence is Sec-independent protein translocase protein TatB (147 aa).

The chain crosses the membrane as a helical span at residues F2 to G22. Positions Q85–Y97 are enriched in polar residues. The disordered stretch occupies residues Q85–G147. Low complexity predominate over residues A113 to S133.

It belongs to the TatB family. The Tat system comprises two distinct complexes: a TatABC complex, containing multiple copies of TatA, TatB and TatC subunits, and a separate TatA complex, containing only TatA subunits. Substrates initially bind to the TatABC complex, which probably triggers association of the separate TatA complex to form the active translocon.

It localises to the cell inner membrane. Its function is as follows. Part of the twin-arginine translocation (Tat) system that transports large folded proteins containing a characteristic twin-arginine motif in their signal peptide across membranes. Together with TatC, TatB is part of a receptor directly interacting with Tat signal peptides. TatB may form an oligomeric binding site that transiently accommodates folded Tat precursor proteins before their translocation. This chain is Sec-independent protein translocase protein TatB, found in Shewanella sp. (strain ANA-3).